Consider the following 359-residue polypeptide: Proton-gated ion channel (359 aa).

Positions 1-43 (MFPTGWRPKLSESIAASRMLWQPMAAVAVVQIGLLWFSPPVWG) are cleaved as a signal peptide. The Periplasmic segment spans residues 44-235 (QDMVSPPPPI…LDYQLRISRQ (192 aa)). A helical transmembrane segment spans residues 236–258 (YFSYIPNIILPMLFILFISWTAF). The Cytoplasmic portion of the chain corresponds to 259–261 (WST). Residues 262-286 (SYEANVTLVVSTLIAHIAFNILVET) traverse the membrane as a helical segment. The Periplasmic segment spans residues 287–294 (NLPKTPYM). A helical transmembrane segment spans residues 295–323 (TYTGAIIFMIYLFYFVAVIEVTVQHYLKV). The Cytoplasmic portion of the chain corresponds to 324–326 (ESQ). A helical transmembrane segment spans residues 327–359 (PARAASITRASRIAFPVVFLLANIILAFLFFGF).

This sequence belongs to the ligand-gated ion channel (TC 1.A.9) family. In terms of assembly, homopentamer.

The protein localises to the cell inner membrane. Tetraethylammonium (TEA) and tetrabutylammonium (TBA) inhibit the proton-activated currents in a dose- and voltage-dependent manner in vitro, whereas the blocker of acid sensing ion channels, amiloride, has no effect. Channel current of GLIC can be inhibited by inhaled and intravenous general anesthetics at and below concentrations used clinically. Ion conduction is also inhibited by lidocaine and by divalent transition metal ions such as cadmium ions. Cationic channel with similar permeabilities for Na(+) and K(+), that is activated by an increase of the proton concentration on the extracellular side. Displays no permeability for chloride ions. Shows slow kinetics of activation, no desensitization and a single channel conductance of 8 pS. Might contribute to adaptation to external pH change. This is Proton-gated ion channel (glvI) from Gloeobacter violaceus (strain ATCC 29082 / PCC 7421).